The following is a 206-amino-acid chain: Outer-membrane lipoprotein carrier protein (206 aa).

The first 21 residues, 1-21 (MKKLLCAVLLSPLLYSNAVLA), serve as a signal peptide directing secretion.

The protein belongs to the LolA family. Monomer.

It localises to the periplasm. Functionally, participates in the translocation of lipoproteins from the inner membrane to the outer membrane. Only forms a complex with a lipoprotein if the residue after the N-terminal Cys is not an aspartate (The Asp acts as a targeting signal to indicate that the lipoprotein should stay in the inner membrane). The sequence is that of Outer-membrane lipoprotein carrier protein from Shewanella oneidensis (strain ATCC 700550 / JCM 31522 / CIP 106686 / LMG 19005 / NCIMB 14063 / MR-1).